Consider the following 430-residue polypeptide: Enolase (430 aa).

Position 167 (Q167) interacts with (2R)-2-phosphoglycerate. E209 functions as the Proton donor in the catalytic mechanism. Residues D245, E286, and D313 each coordinate Mg(2+). (2R)-2-phosphoglycerate contacts are provided by K338, R367, S368, and K389. The Proton acceptor role is filled by K338.

This sequence belongs to the enolase family. Requires Mg(2+) as cofactor.

Its subcellular location is the cytoplasm. The protein localises to the secreted. The protein resides in the cell surface. The enzyme catalyses (2R)-2-phosphoglycerate = phosphoenolpyruvate + H2O. It functions in the pathway carbohydrate degradation; glycolysis; pyruvate from D-glyceraldehyde 3-phosphate: step 4/5. Its function is as follows. Catalyzes the reversible conversion of 2-phosphoglycerate (2-PG) into phosphoenolpyruvate (PEP). It is essential for the degradation of carbohydrates via glycolysis. The protein is Enolase of Synechococcus sp. (strain WH7803).